A 125-amino-acid polypeptide reads, in one-letter code: Putative zinc finger A20 and AN1 domain-containing stress-associated protein 8 (125 aa).

The A20-type zinc-finger motif lies at Thr-2–Ser-36. Zn(2+)-binding residues include Cys-8, Cys-12, Cys-24, Cys-27, Cys-80, Cys-82, His-96, and Cys-98. Residues Leu-61 to Ala-106 form an AN1-type; degenerate zinc finger.

Its function is as follows. May be involved in environmental stress response. In Arabidopsis thaliana (Mouse-ear cress), this protein is Putative zinc finger A20 and AN1 domain-containing stress-associated protein 8 (SAP8).